A 69-amino-acid chain; its full sequence is Large ribosomal subunit protein uL29 (69 aa).

It belongs to the universal ribosomal protein uL29 family.

This chain is Large ribosomal subunit protein uL29, found in Lachnoclostridium phytofermentans (strain ATCC 700394 / DSM 18823 / ISDg) (Clostridium phytofermentans).